Reading from the N-terminus, the 1368-residue chain is DNA-directed RNA polymerase subunit beta (1368 aa).

Belongs to the RNA polymerase beta chain family. As to quaternary structure, the RNAP catalytic core consists of 2 alpha, 1 beta, 1 beta' and 1 omega subunit. When a sigma factor is associated with the core the holoenzyme is formed, which can initiate transcription.

The enzyme catalyses RNA(n) + a ribonucleoside 5'-triphosphate = RNA(n+1) + diphosphate. In terms of biological role, DNA-dependent RNA polymerase catalyzes the transcription of DNA into RNA using the four ribonucleoside triphosphates as substrates. The chain is DNA-directed RNA polymerase subunit beta from Burkholderia cenocepacia (strain ATCC BAA-245 / DSM 16553 / LMG 16656 / NCTC 13227 / J2315 / CF5610) (Burkholderia cepacia (strain J2315)).